Reading from the N-terminus, the 106-residue chain is Biogenesis of lysosome-related organelles complex 1 subunit 4 (106 aa).

Residues 53–106 (THSEGLSEQLKMTEKNILEMENLFDQIDQLCLFVQKAKSDLDKLEKLYNVVDRQ) adopt a coiled-coil conformation.

The protein belongs to the BLOC1S4 family. As to quaternary structure, component of the biogenesis of lysosome-related organelles complex-1 (BLOC-1) composed at least of blos-1, blos-2, blos-4, dsbn-1, glo-2, mutd-1 and snpn-1. Interacts with glo-2.

Functionally, component of the biogenesis of lysosome-related organelles complex-1 (BLOC-1) involved in gut granule biogenesis. The protein is Biogenesis of lysosome-related organelles complex 1 subunit 4 (blos-4) of Caenorhabditis elegans.